The chain runs to 170 residues: Large ribosomal subunit protein uL5 (170 aa).

This sequence belongs to the universal ribosomal protein uL5 family. Part of the 50S ribosomal subunit; contacts the 5S rRNA and probably tRNA. Forms a bridge to the 30S subunit in the 70S ribosome.

Its function is as follows. This is one of the proteins that bind and probably mediate the attachment of the 5S RNA into the large ribosomal subunit, where it forms part of the central protuberance. In the 70S ribosome it contacts protein S13 of the 30S subunit (bridge B1b), connecting the 2 subunits; this bridge is implicated in subunit movement. May contact the P site tRNA; the 5S rRNA and some of its associated proteins might help stabilize positioning of ribosome-bound tRNAs. The chain is Large ribosomal subunit protein uL5 from Methanobrevibacter smithii (strain ATCC 35061 / DSM 861 / OCM 144 / PS).